Consider the following 289-residue polypeptide: Polyisoprenoid diphosphate/phosphate phosphohydrolase PLPP6 (289 aa).

The interval 1–81 (MQSPRRNAEG…SSQALPPQLP (81 aa)) is disordered. Residues 1–126 (MQSPRRNAEG…ESSSWGSMRP (126 aa)) lie on the Cytoplasmic side of the membrane. Residues Ser-23, Ser-30, and Ser-64 each carry the phosphoserine modification. Residues 127–147 (LMKLLEISGHGIPWLLGTLYC) traverse the membrane as a helical segment. Residues 148–158 (LSRSDSWAGRE) are Lumenal-facing. Residues 159–179 (VLMNLLFALLLDLLLVSLIKG) form a helical membrane-spanning segment. Residues 178 to 186 (KGLVRRRRP) form a phosphatase sequence motif I region. Over 180–222 (LVRRRRPAHNQMDMFFTISVDKYSFPSGHTTRAALVSRFILNH) the chain is Cytoplasmic. A phosphatase sequence motif II region spans residues 205–208 (PSGH). Catalysis depends on His-208, which acts as the Proton donors. Residues 223–243 (LVLAIPLRVLVVLWAFILGLS) form a helical membrane-spanning segment. The segment at 243 to 254 (SRVMLGRHNVTD) is phosphatase sequence motif III. The Lumenal segment spans residues 244-254 (RVMLGRHNVTD). His-250 serves as the catalytic Nucleophile. A helical transmembrane segment spans residues 255 to 275 (VAFGFFLGYMQYSIVDYCWLS). Residues 276-289 (PRTAPVLFVLWNQP) are Cytoplasmic-facing.

The protein belongs to the PA-phosphatase related phosphoesterase family. In terms of processing, phosphorylation by PKC activates the phosphatase activity towards presqualene diphosphate.

The protein resides in the endoplasmic reticulum membrane. The protein localises to the nucleus envelope. Its subcellular location is the nucleus inner membrane. It catalyses the reaction presqualene diphosphate + H2O = presqualene phosphate + phosphate + H(+). The enzyme catalyses presqualene phosphate + H2O = presqualene alcohol + phosphate. It carries out the reaction (2E,6E)-farnesyl diphosphate + H2O = (2E,6E)-farnesyl phosphate + phosphate + H(+). The catalysed reaction is (2E,6E)-farnesyl phosphate + H2O = (2E,6E)-farnesol + phosphate. It catalyses the reaction (2E,6E,10E)-geranylgeranyl diphosphate + H2O = (2E,6E,10E)-geranylgeranyl phosphate + phosphate + H(+). The enzyme catalyses (2E,6E,10E)-geranylgeranyl phosphate + H2O = (2E,6E,10E)-geranylgeraniol + phosphate. It carries out the reaction (2E)-geranyl diphosphate + H2O = (2E)-geranyl phosphate + phosphate + H(+). The catalysed reaction is (2E)-geranyl phosphate + H2O = (2E)-geraniol + phosphate. It catalyses the reaction 1,2-dihexadecanoyl-sn-glycero-3-phosphate + H2O = 1,2-dihexadecanoyl-sn-glycerol + phosphate. Functionally, magnesium-independent polyisoprenoid diphosphatase that catalyzes the sequential dephosphorylation of presqualene, farnesyl, geranyl and geranylgeranyl diphosphates. Functions in the innate immune response through the dephosphorylation of presqualene diphosphate which acts as a potent inhibitor of the signaling pathways contributing to polymorphonuclear neutrophils activation. May regulate the biosynthesis of cholesterol and related sterols by dephosphorylating presqualene and farnesyl diphosphate, two key intermediates in this biosynthetic pathway. May also play a role in protein prenylation by acting on farnesyl diphosphate and its derivative geranylgeranyl diphosphate, two precursors for the addition of isoprenoid anchors to membrane proteins. Has a lower activity towards phosphatidic acid (PA), but through phosphatidic acid dephosphorylation may participate in the biosynthesis of phospholipids and triacylglycerols. May also act on ceramide-1-P, lysophosphatidic acid (LPA) and sphing-4-enine 1-phosphate/sphingosine-1-phosphate. The protein is Polyisoprenoid diphosphate/phosphate phosphohydrolase PLPP6 of Bos taurus (Bovine).